Here is an 89-residue protein sequence, read N- to C-terminus: Small ribosomal subunit protein uS15 (89 aa).

This sequence belongs to the universal ribosomal protein uS15 family. Part of the 30S ribosomal subunit. Forms a bridge to the 50S subunit in the 70S ribosome, contacting the 23S rRNA.

Its function is as follows. One of the primary rRNA binding proteins, it binds directly to 16S rRNA where it helps nucleate assembly of the platform of the 30S subunit by binding and bridging several RNA helices of the 16S rRNA. In terms of biological role, forms an intersubunit bridge (bridge B4) with the 23S rRNA of the 50S subunit in the ribosome. This is Small ribosomal subunit protein uS15 from Tolumonas auensis (strain DSM 9187 / NBRC 110442 / TA 4).